Reading from the N-terminus, the 204-residue chain is Holliday junction branch migration complex subunit RuvA (204 aa).

A domain I region spans residues 1–64; that stretch reads MIGRLQGILL…EDAHLLFGFS (64 aa). The interval 65 to 143 is domain II; it reads AKTDRTLFRE…GIKQPDFFVE (79 aa). A flexible linker region spans residues 144–155; the sequence is SSHVGAVDPVTT. The domain III stretch occupies residues 156–204; the sequence is SPEVPAEEAVAALMALGYKASDAEKMVKRIAKPHLTSEQLIREALKAAL.

It belongs to the RuvA family. In terms of assembly, homotetramer. Forms an RuvA(8)-RuvB(12)-Holliday junction (HJ) complex. HJ DNA is sandwiched between 2 RuvA tetramers; dsDNA enters through RuvA and exits via RuvB. An RuvB hexamer assembles on each DNA strand where it exits the tetramer. Each RuvB hexamer is contacted by two RuvA subunits (via domain III) on 2 adjacent RuvB subunits; this complex drives branch migration. In the full resolvosome a probable DNA-RuvA(4)-RuvB(12)-RuvC(2) complex forms which resolves the HJ.

The protein resides in the cytoplasm. The RuvA-RuvB-RuvC complex processes Holliday junction (HJ) DNA during genetic recombination and DNA repair, while the RuvA-RuvB complex plays an important role in the rescue of blocked DNA replication forks via replication fork reversal (RFR). RuvA specifically binds to HJ cruciform DNA, conferring on it an open structure. The RuvB hexamer acts as an ATP-dependent pump, pulling dsDNA into and through the RuvAB complex. HJ branch migration allows RuvC to scan DNA until it finds its consensus sequence, where it cleaves and resolves the cruciform DNA. The protein is Holliday junction branch migration complex subunit RuvA of Mannheimia succiniciproducens (strain KCTC 0769BP / MBEL55E).